We begin with the raw amino-acid sequence, 251 residues long: MLLIPAIDLKDGQCVRLKQGDMDQATIFSEDPAAMARKWVDLGARRLHLVDLNGAFAGKPKNLEAIEAILEEVGDEIPVQLGGGIRSLETIEKYLDAGLSYVIIGTAAVKNPGFLQDACTAFSGSIIVGLDAKDGKVATDGWSKLTGHEVIDLARKFEDYGVESIVYTDIGRDGMLQGINIDATVKLAQAVGIPVIASGGLSNLTDIENLCEVEEHGVEGVICGRAIYSGDLDFAAAQKRADELNGELDDA.

The active-site Proton acceptor is the D8. D131 serves as the catalytic Proton donor.

Belongs to the HisA/HisF family.

It is found in the cytoplasm. It catalyses the reaction 1-(5-phospho-beta-D-ribosyl)-5-[(5-phospho-beta-D-ribosylamino)methylideneamino]imidazole-4-carboxamide = 5-[(5-phospho-1-deoxy-D-ribulos-1-ylimino)methylamino]-1-(5-phospho-beta-D-ribosyl)imidazole-4-carboxamide. Its pathway is amino-acid biosynthesis; L-histidine biosynthesis; L-histidine from 5-phospho-alpha-D-ribose 1-diphosphate: step 4/9. In Burkholderia vietnamiensis (strain G4 / LMG 22486) (Burkholderia cepacia (strain R1808)), this protein is 1-(5-phosphoribosyl)-5-[(5-phosphoribosylamino)methylideneamino] imidazole-4-carboxamide isomerase.